A 208-amino-acid chain; its full sequence is dTTP/UTP pyrophosphatase (208 aa).

The active-site Proton acceptor is the D79.

The protein belongs to the Maf family. YhdE subfamily. It depends on a divalent metal cation as a cofactor.

It is found in the cytoplasm. The enzyme catalyses dTTP + H2O = dTMP + diphosphate + H(+). It carries out the reaction UTP + H2O = UMP + diphosphate + H(+). Its function is as follows. Nucleoside triphosphate pyrophosphatase that hydrolyzes dTTP and UTP. May have a dual role in cell division arrest and in preventing the incorporation of modified nucleotides into cellular nucleic acids. This Mesorhizobium japonicum (strain LMG 29417 / CECT 9101 / MAFF 303099) (Mesorhizobium loti (strain MAFF 303099)) protein is dTTP/UTP pyrophosphatase.